A 356-amino-acid chain; its full sequence is Cyanide hydratase (356 aa).

In terms of domain architecture, CN hydrolase spans Tyr8–Leu287. Residue Glu48 is the Proton acceptor of the active site. Lys130 is an active-site residue. Cys165 acts as the Nucleophile in catalysis.

This sequence belongs to the carbon-nitrogen hydrolase superfamily. Nitrilase family. Oligomer of dimers, forming left-handed helical fibers.

It carries out the reaction formamide = hydrogen cyanide + H2O. In terms of biological role, catalyzes the hydration of cyanide to formamide. Degradation of cyanide may be important for plant pathogenic fungi in infection of cyanogenic plants. Can also transform some nitriles like 2-cyanopyridine and fumaronitrile. The polypeptide is Cyanide hydratase (Aspergillus niger).